The sequence spans 295 residues: MAGLNVSLSFFFATFALCEAARRASKALLPVGAYEVFAREAMRTLVELGPWAGDFGPDLLLTLLFLLFLAHGVTLDGASANPTVSLQEFLMAEQSLPGTLLKLAAQGLGMQAACTLMRLCWAWELSDLHLLQSLMAQSCSSALRTSVPHGALVEAACAFCFHLTLLHLRHSPPAYSGPAVALLVTVTAYTAGPFTSAFFNPALAASVTFACSGHTLLEYVQVYWLGPLTGMVLAVLLHQGRLPHLFQRNLFYGQKNKYRAPRGKPAPASGDTQTPAKGSSVREPGRSGVEGPHSS.

The helical transmembrane segment at 1 to 21 (MAGLNVSLSFFFATFALCEAA) threads the bilayer. The Extracellular segment spans residues 22–54 (RRASKALLPVGAYEVFAREAMRTLVELGPWAGD). A helical transmembrane segment spans residues 55 to 75 (FGPDLLLTLLFLLFLAHGVTL). Residues 76 to 99 (DGASANPTVSLQEFLMAEQSLPGT) are Cytoplasmic-facing. The discontinuously helical intramembrane region spans 77–114 (GASANPTVSLQEFLMAEQSLPGTLLKLAAQGLGMQAAC). An NPA 1 motif is present at residues 81 to 83 (NPT). A helical transmembrane segment spans residues 100–126 (LLKLAAQGLGMQAACTLMRLCWAWELS). Residues 127-145 (DLHLLQSLMAQSCSSALRT) lie on the Extracellular side of the membrane. Residues 146-166 (SVPHGALVEAACAFCFHLTLL) form a helical membrane-spanning segment. At 167–178 (HLRHSPPAYSGP) the chain is on the cytoplasmic side. The helical transmembrane segment at 179–199 (AVALLVTVTAYTAGPFTSAFF) threads the bilayer. Positions 195-206 (TSAFFNPALAAS) form an intramembrane region, discontinuously helical. The NPA 2 motif lies at 200–202 (NPA). At 200–215 (NPALAASVTFACSGHT) the chain is on the extracellular side. A helical membrane pass occupies residues 216–236 (LLEYVQVYWLGPLTGMVLAVL). At 237–295 (LHQGRLPHLFQRNLFYGQKNKYRAPRGKPAPASGDTQTPAKGSSVREPGRSGVEGPHSS) the chain is on the cytoplasmic side. The interval 257–295 (KYRAPRGKPAPASGDTQTPAKGSSVREPGRSGVEGPHSS) is disordered.

This sequence belongs to the MIP/aquaporin (TC 1.A.8) family. AQP11/AQP12 subfamily. In terms of assembly, homotetramer; each monomer provides an independent water pore. Restricted to the pancreas.

Its subcellular location is the membrane. It catalyses the reaction H2O(in) = H2O(out). Functionally, putative aquaporin. Could form homotetrameric transmembrane channels, with each monomer independently mediating water transport across the plasma membrane along its osmotic gradient. The sequence is that of Putative aquaporin-12A from Homo sapiens (Human).